A 342-amino-acid polypeptide reads, in one-letter code: SWR1-complex protein 5 (342 aa).

Disordered regions lie at residues 1-126, 142-178, and 214-238; these read MAPT…PVTI, PRTS…DPDS, and LGEN…RMPR. 2 stretches are compositionally biased toward acidic residues: residues 8–20 and 33–43; these read LAED…DSDF and ISDDDDEEAGE. A compositionally biased stretch (basic residues) spans 78–87; it reads GEKRQKKTKT. Residues 260–341 form the BCNT-C domain; that stretch reads NLSMASRLQA…RRARMAQAGK (82 aa).

This sequence belongs to the SWC5 family. As to quaternary structure, component of the SWR1 chromatin remodeling complex.

Its subcellular location is the nucleus. Component of the SWR1 complex which mediates the ATP-dependent exchange of histone H2A for the H2A variant H2A.Z leading to transcriptional regulation of selected genes by chromatin remodeling. Involved in chromosome stability. This Neurospora crassa (strain ATCC 24698 / 74-OR23-1A / CBS 708.71 / DSM 1257 / FGSC 987) protein is SWR1-complex protein 5 (crc-2).